Consider the following 1578-residue polypeptide: Pentafunctional AROM polypeptide (1578 aa).

Residues 1–384 (MTGPTKISIL…YEPRASVVPN (384 aa)) form a 3-dehydroquinate synthase region. Residues 44–46 (DTN), 81–84 (EVSK), 114–116 (GGV), and Asp119 contribute to the NAD(+) site. Residue Arg130 coordinates 7-phospho-2-dehydro-3-deoxy-D-arabino-heptonate. 139–140 (TT) is an NAD(+) binding site. Asp146 and Lys152 together coordinate 7-phospho-2-dehydro-3-deoxy-D-arabino-heptonate. Residue Lys161 coordinates NAD(+). Residue Asn162 coordinates 7-phospho-2-dehydro-3-deoxy-D-arabino-heptonate. NAD(+) is bound by residues 179–182 (FLET) and Asn190. Glu194 is a binding site for Zn(2+). 7-phospho-2-dehydro-3-deoxy-D-arabino-heptonate-binding positions include 194 to 197 (EVIK) and Lys250. Catalysis depends on Glu260, which acts as the Proton acceptor; for 3-dehydroquinate synthase activity. 7-phospho-2-dehydro-3-deoxy-D-arabino-heptonate is bound by residues 264 to 268 (RNLLN) and His271. His271 is a binding site for Zn(2+). His275 acts as the Proton acceptor; for 3-dehydroquinate synthase activity in catalysis. Residues His287 and Lys356 each coordinate 7-phospho-2-dehydro-3-deoxy-D-arabino-heptonate. His287 provides a ligand contact to Zn(2+). The EPSP synthase stretch occupies residues 397–842 (VYPGVSPASE…WDTLRQKFAV (446 aa)). Cys824 acts as the For EPSP synthase activity in catalysis. The interval 864–1055 (SASVFIIGMR…KKKQHSFFVS (192 aa)) is shikimate kinase. Residue 871–878 (GMRGAGKT) participates in ATP binding. Positions 1056 to 1276 (LTLPDVRGAD…AAPGQLSATD (221 aa)) are 3-dehydroquinase. His1179 (proton acceptor; for 3-dehydroquinate dehydratase activity) is an active-site residue. Lys1207 acts as the Schiff-base intermediate with substrate; for 3-dehydroquinate dehydratase activity in catalysis. Positions 1289-1578 (KKRFALFGSP…YERARAIVLG (290 aa)) are shikimate dehydrogenase.

It in the N-terminal section; belongs to the sugar phosphate cyclases superfamily. Dehydroquinate synthase family. In the 2nd section; belongs to the EPSP synthase family. The protein in the 3rd section; belongs to the shikimate kinase family. This sequence in the 4th section; belongs to the type-I 3-dehydroquinase family. It in the C-terminal section; belongs to the shikimate dehydrogenase family. Homodimer. The cofactor is Zn(2+).

Its subcellular location is the cytoplasm. It carries out the reaction 7-phospho-2-dehydro-3-deoxy-D-arabino-heptonate = 3-dehydroquinate + phosphate. The enzyme catalyses 3-dehydroquinate = 3-dehydroshikimate + H2O. It catalyses the reaction shikimate + NADP(+) = 3-dehydroshikimate + NADPH + H(+). The catalysed reaction is shikimate + ATP = 3-phosphoshikimate + ADP + H(+). It carries out the reaction 3-phosphoshikimate + phosphoenolpyruvate = 5-O-(1-carboxyvinyl)-3-phosphoshikimate + phosphate. The protein operates within metabolic intermediate biosynthesis; chorismate biosynthesis; chorismate from D-erythrose 4-phosphate and phosphoenolpyruvate: step 2/7. It functions in the pathway metabolic intermediate biosynthesis; chorismate biosynthesis; chorismate from D-erythrose 4-phosphate and phosphoenolpyruvate: step 3/7. It participates in metabolic intermediate biosynthesis; chorismate biosynthesis; chorismate from D-erythrose 4-phosphate and phosphoenolpyruvate: step 4/7. Its pathway is metabolic intermediate biosynthesis; chorismate biosynthesis; chorismate from D-erythrose 4-phosphate and phosphoenolpyruvate: step 5/7. The protein operates within metabolic intermediate biosynthesis; chorismate biosynthesis; chorismate from D-erythrose 4-phosphate and phosphoenolpyruvate: step 6/7. In terms of biological role, the AROM polypeptide catalyzes 5 consecutive enzymatic reactions in prechorismate polyaromatic amino acid biosynthesis. The polypeptide is Pentafunctional AROM polypeptide (Neosartorya fischeri (strain ATCC 1020 / DSM 3700 / CBS 544.65 / FGSC A1164 / JCM 1740 / NRRL 181 / WB 181) (Aspergillus fischerianus)).